The sequence spans 652 residues: Potassium voltage-gated channel subfamily KQT member 1 (652 aa).

Residues 1–110 (MSSEQPAWTF…YNFLERPTGW (110 aa)) are Cytoplasmic-facing. Residues 111-132 (KCFVYHFTVFLIVLICLIFSVL) traverse the membrane as a helical segment. Over 133–143 (STIQQYNNLAT) the chain is Extracellular. The chain crosses the membrane as a helical span at residues 144–166 (ETLFWMEIVLVVFFGAEYVVRLW). The Cytoplasmic portion of the chain corresponds to 167 to 182 (SAGCRSKYVGVWGRLR). A helical transmembrane segment spans residues 183–208 (FARKPISVIDLIVVVASVIVLCVGSN). Topologically, residues 209 to 216 (GQVFATSA) are extracellular. A helical; Voltage-sensor membrane pass occupies residues 217 to 232 (IRGIRFLQILRMLHVD). The tract at residues 228–236 (MLHVDRQGG) is interaction with KCNE3. Residues 233-250 (RQGGTWRLLGSVVFIHRQ) are Cytoplasmic-facing. Residue Q234 participates in a 1,2-diacyl-sn-glycero-3-phospho-(1D-myo-inositol-4,5-bisphosphate) binding. The chain crosses the membrane as a helical span at residues 251–273 (ELITTLYIGFLGLIFSSYFVYLA). At 274–289 (EKDAIDSSGEYQFGSY) the chain is on the extracellular side. The pore-forming intramembrane region spans 290 to 310 (ADALWWGVVTVTTIGYGDKVP). The Extracellular portion of the chain corresponds to 311–312 (QT). Residues 313–338 (WIGKTIASCFSVFAISFFALPAGILG) form a helical membrane-spanning segment. At 339-652 (SGFALKVQQK…VPRMTQDNIS (314 aa)) the chain is on the cytoplasmic side. The segment at 360 to 372 (AAASLIQTAWRCY) is interaction with CALM. Residues 393–419 (HHLMSPSPKPKKSAMVKKKKIRTERDE) form a disordered region. A compositionally biased stretch (basic residues) spans 401–414 (KPKKSAMVKKKKIR). The segment at 504–518 (KVIRRMQYFVAKKKF) is interaction with CALM; calcium-dependent. The interval 524–561 (PYDVRDVIEQYSQGHLNLMVRIKELQRRLDQSLGKPSL) is interaction with KCNE1 C-terminus. Residues 577-605 (IGSRLNRVEDKVTQMDHKLNLITDMLHHL) form an interaction with AKAP9 region. The interval 578 to 609 (GSRLNRVEDKVTQMDHKLNLITDMLHHLLTNQ) is C-terminal assembly domain (tetramerization). The disordered stretch occupies residues 609–652 (QQGSQSIRTPHRSNSLNSENHPSRNTLPTYEQLNVPRMTQDNIS).

The protein belongs to the potassium channel family. KQT (TC 1.A.1.15) subfamily. Kv7.1/KCNQ1 sub-subfamily. As to quaternary structure, tetramer. Heterotetramer with KCNE1; targets to the membrane raft. Interacts (via C-terminus) with CALM; forms a heterotetramer in a calcium-independent manner. Interacts with KCNE2; form a heterooligomer complex that targets to the membrane raft and leading to currents with an apparently instantaneous activation, a rapid deactivation process and a linear current-voltage relationship and decreases the amplitude of the outward current. Interacts with KCNE3; four KCNE3 molecules are bound to one KCNQ1 tetramer (4:4 KCNQ1:KCNE3 stoichiometry); alters membrane raft localization; affects KCNQ1 structure and gating properties. Interacts with KCNE4; impairs KCNQ1 localization in lipid rafts and inhibits voltage-gated potassium channel activity. Interacts with KCNE5; impairs KCNQ1 localization in lipid rafts and only conducts current upon strong and continued depolarization.

Its subcellular location is the cell membrane. The protein resides in the cytoplasmic vesicle membrane. It localises to the membrane raft. It is found in the endoplasmic reticulum. The protein localises to the basolateral cell membrane. It carries out the reaction K(+)(in) = K(+)(out). Its activity is regulated as follows. PIP2 molecule is essential to activate KCNQ channels by inducing the coupling of the voltage-sensing domain (VSD) and the pore-forming domain (PD). Upon channel activation, PIP2 disrupts the VSD-calmodulin/CALM interactions, causing the release of CALM from the VSD which triggers the opening of the gate. Calcium potentiates KCNQ1 channel current through calcium-bound CALM. Calcium-bound CALM competes with PIP2 to stabilize the channel open state. Its function is as follows. Pore-forming subunit of the voltage-gated potassium (Kv) channel involved in the regulation of cardiomyocyte excitability and important in normal development and functions of myocardium, inner ear, stomach and colon. Associates with KCNE beta subunits that modulates current kinetics. Induces a voltage-dependent by rapidly activating and slowly deactivating potassium-selective outward current. Also promotes a delayed voltage activated potassium current showing outward rectification characteristic. During beta-adrenergic receptor stimulation participates in cardiac repolarization by associating with KCNE1 to form the I(Ks) cardiac potassium current that increases the amplitude and slows down the activation kinetics of outward potassium current I(Ks). When associated with KCNE3, forms the potassium channel that is important for cyclic AMP-stimulated intestinal secretion of chloride ions. When associated with KCNE2, forms a heterooligomer complex leading to currents with an apparently instantaneous activation, a rapid deactivation process and a linear current-voltage relationship and decreases the amplitude of the outward current. When associated with KCNE4, inhibits voltage-gated potassium channel activity. When associated with KCNE5, this complex only conducts current upon strong and continued depolarization. This chain is Potassium voltage-gated channel subfamily KQT member 1, found in Xenopus laevis (African clawed frog).